The sequence spans 211 residues: Transmembrane protein 247 (211 aa).

2 stretches are compositionally biased toward basic and acidic residues: residues 1-10 (MAMEDREVME) and 31-45 (PEGK…EVPK). The segment at 1-90 (MAMEDREVME…AGDGPGLESV (90 aa)) is disordered. Residues 63–73 (PGPPRSLPPKS) are compositionally biased toward pro residues. Positions 119–148 (KYLHQENERQRQHEEVMEQLQQQQQQQQAL) form a coiled coil. 2 helical membrane passes run 159-179 (LLLP…IHII) and 186-206 (VFFL…LCLI).

Its subcellular location is the membrane. The protein is Transmembrane protein 247 (Tmem247) of Mus musculus (Mouse).